The following is a 509-amino-acid chain: MKKQGSPSNPAPVLPALPEPLKDLKIKYTKIFINNEWHDSVSGKKFEVFNPANEEKICEVAEGDKADIDKAVKAARKAFELGSPWRTMDASERGRLLNKLADLVERDRLTLATMEAIDGGKLFSTAYLMDLGACIKTIRYCAGWADKIHGRTVPMDGNFFTFTRHEPVGVCGQIIPWNFPLVMFIWKIAPALCCGNTVVVKPAEQTPLSALYMGSLIKEAGFPPGVVNIVPGFGPTAGAAISHHMDIDKVSFTGSTEVGKLIKEAAGKTNLKRVTLELGGKSPNIIFADADLDEAAEFAHIGLFYHQGQCCIAGSRIFVEEPIYDEFVRRSIERAKKYTLGDPLLPGVQQGPQIDKEQFQKILDLIESGKKEGAKLECGGGPWGNKGYFIQPTVFSNVTDDMRIAKEEIFGPVQQIMKFKTIDEVIKRANNTTYGLAAAVFTKDIDKALTFASALQAGTVWVNCYSAFSAQCPFGGFKMSGNGRELGEYGLQEYTEVKTVTIKIPQKNS.

NAD(+)-binding positions include 175–178 (IPWN), 201–204 (KPAE), 234–235 (GP), 254–255 (GS), and 277–279 (ELG). The Proton acceptor role is filled by E277. C311 functions as the Nucleophile in the catalytic mechanism. NAD(+) contacts are provided by residues 357–361 (EQFQK) and 408–410 (EIF).

The protein belongs to the aldehyde dehydrogenase family. Homotetramer.

The protein localises to the cytoplasm. It localises to the cytosol. Its subcellular location is the cell projection. It is found in the axon. The catalysed reaction is an aldehyde + NAD(+) + H2O = a carboxylate + NADH + 2 H(+). It catalyses the reaction all-trans-retinal + NAD(+) + H2O = all-trans-retinoate + NADH + 2 H(+). The enzyme catalyses 9-cis-retinal + NAD(+) + H2O = 9-cis-retinoate + NADH + 2 H(+). It carries out the reaction 11-cis-retinal + NAD(+) + H2O = 11-cis-retinoate + NADH + 2 H(+). The catalysed reaction is 13-cis-retinal + NAD(+) + H2O = 13-cis-retinoate + NADH + 2 H(+). It catalyses the reaction 3-deoxyglucosone + NAD(+) + H2O = 2-dehydro-3-deoxy-D-gluconate + NADH + 2 H(+). The enzyme catalyses (E)-4-hydroxynon-2-enal + NAD(+) + H2O = (E)-4-hydroxynon-2-enoate + NADH + 2 H(+). It carries out the reaction malonaldehyde + NAD(+) + H2O = 3-oxopropanoate + NADH + 2 H(+). The catalysed reaction is hexanal + NAD(+) + H2O = hexanoate + NADH + 2 H(+). It catalyses the reaction propanal + NAD(+) + H2O = propanoate + NADH + 2 H(+). The enzyme catalyses acetaldehyde + NAD(+) + H2O = acetate + NADH + 2 H(+). It carries out the reaction benzaldehyde + NAD(+) + H2O = benzoate + NADH + 2 H(+). The catalysed reaction is 4-aminobutanal + NAD(+) + H2O = 4-aminobutanoate + NADH + 2 H(+). It participates in cofactor metabolism; retinol metabolism. In terms of biological role, cytosolic dehydrogenase that catalyzes the irreversible oxidation of a wide range of aldehydes to their corresponding carboxylic acid. Functions downstream of retinol dehydrogenases and catalyzes the oxidation of retinaldehyde into retinoic acid, the second step in the oxidation of retinol/vitamin A into retinoic acid. This pathway is crucial to control the levels of retinol and retinoic acid, two important molecules which excess can be teratogenic and cytotoxic. Also oxidizes aldehydes resulting from lipid peroxidation like (E)-4-hydroxynon-2-enal/HNE, malonaldehyde and hexanal that form protein adducts and are highly cytotoxic. By participating for instance to the clearance of (E)-4-hydroxynon-2-enal/HNE in the lens epithelium prevents the formation of HNE-protein adducts and lens opacification. Also functions downstream of fructosamine-3-kinase in the fructosamine degradation pathway by catalyzing the oxidation of 3-deoxyglucosone, the carbohydrate product of fructosamine 3-phosphate decomposition, which is itself a potent glycating agent that may react with lysine and arginine side-chains of proteins. Also has an aminobutyraldehyde dehydrogenase activity and is probably part of an alternative pathway for the biosynthesis of GABA/4-aminobutanoate in midbrain, thereby playing a role in GABAergic synaptic transmission. The polypeptide is Aldehyde dehydrogenase 1A1 (Gallus gallus (Chicken)).